Consider the following 378-residue polypeptide: Packaging protein 3 (378 aa).

Disordered stretches follow at residues 1–73 (MHPV…EGPV) and 355–378 (SRPP…DDFI). The interval 1–178 (MHPVLQSVRN…AFGEELRNTC (178 aa)) is interaction with packaging protein 1. Low complexity-rich tracts occupy residues 16 to 35 (GGPH…SVRR) and 49 to 58 (PGAGATPTAG). S362 carries the post-translational modification Phosphoserine; by host. Acidic residues predominate over residues 363-378 (FADEGPSESDDEDDFI).

Belongs to the adenoviridae packaging protein 3 family. In terms of assembly, part of the genome packaging complex composed of packaging proteins 1, 2 and 3; this complex specifically binds to the packaging sequence on the left end of viral genomic DNA and performs packaging of the viral genome. Interacts with hexon-linking protein IIIa; this interaction is required to promote correct genome packaging. In terms of processing, cleaved at different sites by the viral protease during virion maturation.

The protein localises to the host nucleus. Involved in viral genome packaging through its interaction with packaging proteins 1 and 2. After proteolytic cleavage by adenovirus protease, L1 52/55k protein is removed from the capsid during viral maturation. This chain is Packaging protein 3, found in Galliformes (FAdV-1).